A 299-amino-acid polypeptide reads, in one-letter code: Pyridoxal 5'-phosphate synthase subunit PdxS (299 aa).

A D-ribose 5-phosphate-binding site is contributed by Asp-24. The active-site Schiff-base intermediate with D-ribose 5-phosphate is Lys-81. Gly-153 is a binding site for D-ribose 5-phosphate. Arg-165 is a binding site for D-glyceraldehyde 3-phosphate. Residues Gly-219 and 240 to 241 contribute to the D-ribose 5-phosphate site; that span reads GS.

The protein belongs to the PdxS/SNZ family. In the presence of PdxT, forms a dodecamer of heterodimers.

The enzyme catalyses aldehydo-D-ribose 5-phosphate + D-glyceraldehyde 3-phosphate + L-glutamine = pyridoxal 5'-phosphate + L-glutamate + phosphate + 3 H2O + H(+). It participates in cofactor biosynthesis; pyridoxal 5'-phosphate biosynthesis. Functionally, catalyzes the formation of pyridoxal 5'-phosphate from ribose 5-phosphate (RBP), glyceraldehyde 3-phosphate (G3P) and ammonia. The ammonia is provided by the PdxT subunit. Can also use ribulose 5-phosphate and dihydroxyacetone phosphate as substrates, resulting from enzyme-catalyzed isomerization of RBP and G3P, respectively. The chain is Pyridoxal 5'-phosphate synthase subunit PdxS from Methanococcus maripaludis (strain C6 / ATCC BAA-1332).